We begin with the raw amino-acid sequence, 479 residues long: Glutamate--tRNA ligase (479 aa).

Residues 11 to 21 (PSPTGYLHIGG) carry the 'HIGH' region motif. Residues cysteine 108, cysteine 110, cysteine 135, and glutamate 137 each contribute to the Zn(2+) site. The 'KMSKS' region motif lies at 250 to 254 (KLSKR). Lysine 253 provides a ligand contact to ATP.

This sequence belongs to the class-I aminoacyl-tRNA synthetase family. Glutamate--tRNA ligase type 1 subfamily. Monomer. Requires Zn(2+) as cofactor.

It localises to the cytoplasm. It catalyses the reaction tRNA(Glu) + L-glutamate + ATP = L-glutamyl-tRNA(Glu) + AMP + diphosphate. Its function is as follows. Catalyzes the attachment of glutamate to tRNA(Glu) in a two-step reaction: glutamate is first activated by ATP to form Glu-AMP and then transferred to the acceptor end of tRNA(Glu). The sequence is that of Glutamate--tRNA ligase from Myxococcus xanthus (strain DK1622).